The primary structure comprises 179 residues: Large ribosomal subunit protein uL5 (179 aa).

It belongs to the universal ribosomal protein uL5 family. Part of the 50S ribosomal subunit; part of the 5S rRNA/L5/L18/L25 subcomplex. Contacts the 5S rRNA and the P site tRNA. Forms a bridge to the 30S subunit in the 70S ribosome.

This is one of the proteins that bind and probably mediate the attachment of the 5S RNA into the large ribosomal subunit, where it forms part of the central protuberance. In the 70S ribosome it contacts protein S13 of the 30S subunit (bridge B1b), connecting the 2 subunits; this bridge is implicated in subunit movement. Contacts the P site tRNA; the 5S rRNA and some of its associated proteins might help stabilize positioning of ribosome-bound tRNAs. This chain is Large ribosomal subunit protein uL5, found in Shewanella oneidensis (strain ATCC 700550 / JCM 31522 / CIP 106686 / LMG 19005 / NCIMB 14063 / MR-1).